The chain runs to 415 residues: UDP-N-acetylmuramoylalanine--D-glutamate ligase (415 aa).

ATP is bound at residue 91-97 (GTDGKST).

This sequence belongs to the MurCDEF family.

The protein resides in the cytoplasm. It catalyses the reaction UDP-N-acetyl-alpha-D-muramoyl-L-alanine + D-glutamate + ATP = UDP-N-acetyl-alpha-D-muramoyl-L-alanyl-D-glutamate + ADP + phosphate + H(+). The protein operates within cell wall biogenesis; peptidoglycan biosynthesis. In terms of biological role, cell wall formation. Catalyzes the addition of glutamate to the nucleotide precursor UDP-N-acetylmuramoyl-L-alanine (UMA). This is UDP-N-acetylmuramoylalanine--D-glutamate ligase from Aquifex aeolicus (strain VF5).